A 369-amino-acid polypeptide reads, in one-letter code: Histidinol-phosphate aminotransferase 2 (369 aa).

Lys-231 is modified (N6-(pyridoxal phosphate)lysine).

Belongs to the class-II pyridoxal-phosphate-dependent aminotransferase family. Histidinol-phosphate aminotransferase subfamily. In terms of assembly, homodimer. Pyridoxal 5'-phosphate serves as cofactor.

It carries out the reaction L-histidinol phosphate + 2-oxoglutarate = 3-(imidazol-4-yl)-2-oxopropyl phosphate + L-glutamate. It participates in amino-acid biosynthesis; L-histidine biosynthesis; L-histidine from 5-phospho-alpha-D-ribose 1-diphosphate: step 7/9. This Legionella pneumophila (strain Lens) protein is Histidinol-phosphate aminotransferase 2.